Reading from the N-terminus, the 200-residue chain is GTP-binding protein rho5 (200 aa).

Position 13–20 (13–20 (GDGACGKT)) interacts with GTP. The short motif at 35–43 (YVPTVFENY) is the Effector region element. Residues 60 to 64 (DTAGQ) and 118 to 121 (CKVD) contribute to the GTP site. Residue cysteine 197 is modified to Cysteine methyl ester. Cysteine 197 carries the S-geranylgeranyl cysteine lipid modification. Residues 198 to 200 (ILL) constitute a propeptide, removed in mature form.

Belongs to the small GTPase superfamily. Rho family.

It is found in the cell membrane. This chain is GTP-binding protein rho5 (rho5), found in Schizosaccharomyces pombe (strain 972 / ATCC 24843) (Fission yeast).